The sequence spans 213 residues: Holliday junction branch migration complex subunit RuvA (213 aa).

The domain I stretch occupies residues 1 to 63 (MIGMLTGRVA…EDAFKLYGFL (63 aa)). Residues 64 to 142 (DDIDRAWFVH…PTGRSFSIGL (79 aa)) are domain II. The tract at residues 143–160 (PVHSDDGTTGGAPVAPAG) is flexible linker. The segment at 161–213 (GDSLAREDAVSALVNLGYNESQARQAVAKILRDADSEAPLGDVIRLSLKELAA) is domain III.

This sequence belongs to the RuvA family. Homotetramer. Forms an RuvA(8)-RuvB(12)-Holliday junction (HJ) complex. HJ DNA is sandwiched between 2 RuvA tetramers; dsDNA enters through RuvA and exits via RuvB. An RuvB hexamer assembles on each DNA strand where it exits the tetramer. Each RuvB hexamer is contacted by two RuvA subunits (via domain III) on 2 adjacent RuvB subunits; this complex drives branch migration. In the full resolvosome a probable DNA-RuvA(4)-RuvB(12)-RuvC(2) complex forms which resolves the HJ.

The protein localises to the cytoplasm. In terms of biological role, the RuvA-RuvB-RuvC complex processes Holliday junction (HJ) DNA during genetic recombination and DNA repair, while the RuvA-RuvB complex plays an important role in the rescue of blocked DNA replication forks via replication fork reversal (RFR). RuvA specifically binds to HJ cruciform DNA, conferring on it an open structure. The RuvB hexamer acts as an ATP-dependent pump, pulling dsDNA into and through the RuvAB complex. HJ branch migration allows RuvC to scan DNA until it finds its consensus sequence, where it cleaves and resolves the cruciform DNA. This is Holliday junction branch migration complex subunit RuvA from Maricaulis maris (strain MCS10) (Caulobacter maris).